Reading from the N-terminus, the 711-residue chain is Polyribonucleotide nucleotidyltransferase (711 aa).

Residues Asp-494 and Asp-500 each coordinate Mg(2+). The KH domain maps to 560–620 (PKIEIFGVDP…INVENAKSDI (61 aa)). The S1 motif domain maps to 651-710 (GEEFDGVVKKIMDFGAFISLKDGIDGLLHVSKIKTQLSEGDTLRVKVEEIKRGKISLELC).

Belongs to the polyribonucleotide nucleotidyltransferase family. Mg(2+) is required as a cofactor.

It localises to the cytoplasm. It catalyses the reaction RNA(n+1) + phosphate = RNA(n) + a ribonucleoside 5'-diphosphate. Functionally, involved in mRNA degradation. Catalyzes the phosphorolysis of single-stranded polyribonucleotides processively in the 3'- to 5'-direction. The sequence is that of Polyribonucleotide nucleotidyltransferase from Campylobacter hominis (strain ATCC BAA-381 / DSM 21671 / CCUG 45161 / LMG 19568 / NCTC 13146 / CH001A).